Here is a 430-residue protein sequence, read N- to C-terminus: Gamma-glutamyl phosphate reductase (430 aa).

This sequence belongs to the gamma-glutamyl phosphate reductase family.

It is found in the cytoplasm. The catalysed reaction is L-glutamate 5-semialdehyde + phosphate + NADP(+) = L-glutamyl 5-phosphate + NADPH + H(+). Its pathway is amino-acid biosynthesis; L-proline biosynthesis; L-glutamate 5-semialdehyde from L-glutamate: step 2/2. Catalyzes the NADPH-dependent reduction of L-glutamate 5-phosphate into L-glutamate 5-semialdehyde and phosphate. The product spontaneously undergoes cyclization to form 1-pyrroline-5-carboxylate. This is Gamma-glutamyl phosphate reductase from Methylococcus capsulatus (strain ATCC 33009 / NCIMB 11132 / Bath).